The sequence spans 299 residues: ATP phosphoribosyltransferase (299 aa).

This sequence belongs to the ATP phosphoribosyltransferase family. Long subfamily. Requires Mg(2+) as cofactor.

The protein localises to the cytoplasm. It catalyses the reaction 1-(5-phospho-beta-D-ribosyl)-ATP + diphosphate = 5-phospho-alpha-D-ribose 1-diphosphate + ATP. The protein operates within amino-acid biosynthesis; L-histidine biosynthesis; L-histidine from 5-phospho-alpha-D-ribose 1-diphosphate: step 1/9. Its activity is regulated as follows. Feedback inhibited by histidine. Its function is as follows. Catalyzes the condensation of ATP and 5-phosphoribose 1-diphosphate to form N'-(5'-phosphoribosyl)-ATP (PR-ATP). Has a crucial role in the pathway because the rate of histidine biosynthesis seems to be controlled primarily by regulation of HisG enzymatic activity. In Pasteurella multocida (strain Pm70), this protein is ATP phosphoribosyltransferase (hisG).